A 177-amino-acid polypeptide reads, in one-letter code: Alkyl hydroperoxide reductase AhpD (177 aa).

The Proton donor role is filled by Cys131. Residues Cys131 and Cys134 are joined by a disulfide bond. The active-site Cysteine sulfenic acid (-SOH) intermediate is Cys134.

This sequence belongs to the AhpD family.

The catalysed reaction is N(6)-[(R)-dihydrolipoyl]-L-lysyl-[lipoyl-carrier protein] + a hydroperoxide = N(6)-[(R)-lipoyl]-L-lysyl-[lipoyl-carrier protein] + an alcohol + H2O. Its function is as follows. Antioxidant protein with alkyl hydroperoxidase activity. Required for the reduction of the AhpC active site cysteine residues and for the regeneration of the AhpC enzyme activity. This is Alkyl hydroperoxide reductase AhpD from Solibacter usitatus (strain Ellin6076).